Consider the following 342-residue polypeptide: Protein-ribulosamine 3-kinase, chloroplastic (342 aa).

The N-terminal 46 residues, 1-46, are a transit peptide targeting the chloroplast; it reads MANVALLSAASPSTSSAAPRLRHVARRRPSRRSACPRSAASRLSIM. 141–143 is an ATP binding site; sequence EFI. Asp246 serves as the catalytic Proton acceptor.

This sequence belongs to the fructosamine kinase family.

Its subcellular location is the plastid. The protein resides in the chloroplast. The catalysed reaction is N(6)-D-ribulosyl-L-lysyl-[protein] + ATP = N(6)-(3-O-phospho-D-ribulosyl)-L-lysyl-[protein] + ADP + H(+). It carries out the reaction N(6)-(D-erythrulosyl)-L-lysyl-[protein] + ATP = N(6)-(3-O-phospho-D-erythrulosyl)-L-lysyl-[protein] + ADP + H(+). Functionally, initiates a process leading to the deglycation of proteins. Phosphorylates low-molecular-mass and protein-bound erythrulosamines and ribulosamines, but not fructosamines or psicosamines, on the third carbon of the sugar moiety. Protein-bound erythrulosamine 3-phosphates and ribulosamine 3-phosphates are unstable and decompose under physiological conditions. In Oryza sativa subsp. japonica (Rice), this protein is Protein-ribulosamine 3-kinase, chloroplastic.